Reading from the N-terminus, the 425-residue chain is Probable threonylcarbamoyladenosine tRNA methylthiotransferase (425 aa).

In terms of domain architecture, MTTase N-terminal spans 2–110 (VKIYIENYGC…IIQAVEYALR (109 aa)). [4Fe-4S] cluster is bound by residues Cys-11, Cys-47, Cys-76, Cys-148, Cys-152, and Cys-155. The Radical SAM core domain maps to 133–363 (LSPRTVYFIV…HRIRLQISYE (231 aa)). The TRAM domain maps to 366-425 (QKYIGKKVEVLIHGEGKKGNVDAVTMNYKHVILPFGNSGEFRIAEIKNATSTYLLGEVMS).

Belongs to the methylthiotransferase family. CDKAL1 subfamily. Requires [4Fe-4S] cluster as cofactor.

It carries out the reaction N(6)-L-threonylcarbamoyladenosine(37) in tRNA + (sulfur carrier)-SH + AH2 + 2 S-adenosyl-L-methionine = 2-methylsulfanyl-N(6)-L-threonylcarbamoyladenosine(37) in tRNA + (sulfur carrier)-H + 5'-deoxyadenosine + L-methionine + A + S-adenosyl-L-homocysteine + 2 H(+). Functionally, catalyzes the methylthiolation of N6-threonylcarbamoyladenosine (t(6)A), leading to the formation of 2-methylthio-N6-threonylcarbamoyladenosine (ms(2)t(6)A) at position 37 in tRNAs that read codons beginning with adenine. This Pyrococcus abyssi (strain GE5 / Orsay) protein is Probable threonylcarbamoyladenosine tRNA methylthiotransferase.